The chain runs to 142 residues: FAD synthase (142 aa).

ATP contacts are provided by residues 9 to 10, 14 to 17, D93, and Y120; these read VF and HLGH.

Belongs to the archaeal FAD synthase family. In terms of assembly, homodimer. A divalent metal cation serves as cofactor.

It carries out the reaction FMN + ATP + H(+) = FAD + diphosphate. It functions in the pathway cofactor biosynthesis; FAD biosynthesis; FAD from FMN: step 1/1. Its function is as follows. Catalyzes the transfer of the AMP portion of ATP to flavin mononucleotide (FMN) to produce flavin adenine dinucleotide (FAD) coenzyme. In Thermoplasma volcanium (strain ATCC 51530 / DSM 4299 / JCM 9571 / NBRC 15438 / GSS1), this protein is FAD synthase (ribL).